Here is a 976-residue protein sequence, read N- to C-terminus: uncharacterized protein (976 aa).

This is an uncharacterized protein from Acanthamoeba polyphaga (Amoeba).